The following is a 902-amino-acid chain: Cytosolic 10-formyltetrahydrofolate dehydrogenase (902 aa).

Positions 1 to 310 are hydrolase domain; sequence MKIAVIGQSL…LASNFFKGAA (310 aa). Ser-9 carries the post-translational modification Phosphoserine. Lys-38 is subject to N6-succinyllysine. A (6R)-10-formyltetrahydrofolate-binding site is contributed by 88-90; the sequence is QFI. His-106 (proton donor) is an active-site residue. Residue Asp-142 participates in (6R)-10-formyltetrahydrofolate binding. Positions 318-395 constitute a Carrier domain; it reads EAELVTAEAV…DFIQLLVRKL (78 aa). Ser-354 carries the post-translational modification O-(pantetheine 4'-phosphoryl)serine. Residues 417–902 form an aldehyde dehydrogenase domain region; the sequence is TIRIPHQLFI…LRVKTVTFEY (486 aa). Residues 571–573 and 597–600 contribute to the NADP(+) site; these read IPW and KPAQ. Phosphoserine is present on residues Ser-629 and Ser-631. Residues 630-635 and 650-651 each bind NADP(+); these read GSLVGQ and GS. Lys-660 bears the N6-succinyllysine mark. Residue Glu-673 is the Proton acceptor of the active site. 673 to 674 contributes to the NADP(+) binding site; that stretch reads EL. Cys-707 acts as the Proton donor in catalysis. Residue Lys-757 participates in NADP(+) binding. N6-succinyllysine is present on Lys-767. 804-806 is an NADP(+) binding site; that stretch reads ESF. Position 825 is a phosphoserine (Ser-825). Lys-882 is subject to N6-acetyllysine.

This sequence in the N-terminal section; belongs to the GART family. It in the C-terminal section; belongs to the aldehyde dehydrogenase family. ALDH1L subfamily. As to quaternary structure, homotetramer. In terms of processing, phosphopantetheinylation at Ser-354 by AASDHPPT is required for the formyltetrahydrofolate dehydrogenase activity.

It is found in the cytoplasm. It localises to the cytosol. It catalyses the reaction (6R)-10-formyltetrahydrofolate + NADP(+) + H2O = (6S)-5,6,7,8-tetrahydrofolate + CO2 + NADPH + H(+). Its function is as follows. Cytosolic 10-formyltetrahydrofolate dehydrogenase that catalyzes the NADP(+)-dependent conversion of 10-formyltetrahydrofolate to tetrahydrofolate and carbon dioxide. May also have an NADP(+)-dependent aldehyde dehydrogenase activity towards formaldehyde, acetaldehyde, propionaldehyde, and benzaldehyde. This chain is Cytosolic 10-formyltetrahydrofolate dehydrogenase, found in Pongo abelii (Sumatran orangutan).